Consider the following 264-residue polypeptide: 3-methyl-2-oxobutanoate hydroxymethyltransferase (264 aa).

The Mg(2+) site is built by D45 and D84. Residues 45–46 (DS), D84, and K112 contribute to the 3-methyl-2-oxobutanoate site. E114 is a binding site for Mg(2+). E181 (proton acceptor) is an active-site residue.

The protein belongs to the PanB family. In terms of assembly, homodecamer; pentamer of dimers. Requires Mg(2+) as cofactor.

The protein resides in the cytoplasm. The catalysed reaction is 3-methyl-2-oxobutanoate + (6R)-5,10-methylene-5,6,7,8-tetrahydrofolate + H2O = 2-dehydropantoate + (6S)-5,6,7,8-tetrahydrofolate. The protein operates within cofactor biosynthesis; (R)-pantothenate biosynthesis; (R)-pantoate from 3-methyl-2-oxobutanoate: step 1/2. Functionally, catalyzes the reversible reaction in which hydroxymethyl group from 5,10-methylenetetrahydrofolate is transferred onto alpha-ketoisovalerate to form ketopantoate. In Shewanella amazonensis (strain ATCC BAA-1098 / SB2B), this protein is 3-methyl-2-oxobutanoate hydroxymethyltransferase.